The sequence spans 480 residues: Aspartyl/glutamyl-tRNA(Asn/Gln) amidotransferase subunit B (480 aa).

The protein belongs to the GatB/GatE family. GatB subfamily. In terms of assembly, heterotrimer of A, B and C subunits.

The enzyme catalyses L-glutamyl-tRNA(Gln) + L-glutamine + ATP + H2O = L-glutaminyl-tRNA(Gln) + L-glutamate + ADP + phosphate + H(+). It catalyses the reaction L-aspartyl-tRNA(Asn) + L-glutamine + ATP + H2O = L-asparaginyl-tRNA(Asn) + L-glutamate + ADP + phosphate + 2 H(+). Allows the formation of correctly charged Asn-tRNA(Asn) or Gln-tRNA(Gln) through the transamidation of misacylated Asp-tRNA(Asn) or Glu-tRNA(Gln) in organisms which lack either or both of asparaginyl-tRNA or glutaminyl-tRNA synthetases. The reaction takes place in the presence of glutamine and ATP through an activated phospho-Asp-tRNA(Asn) or phospho-Glu-tRNA(Gln). This chain is Aspartyl/glutamyl-tRNA(Asn/Gln) amidotransferase subunit B, found in Hahella chejuensis (strain KCTC 2396).